We begin with the raw amino-acid sequence, 263 residues long: Ribosomal RNA large subunit methyltransferase E (263 aa).

The S-adenosyl-L-methionine site is built by G50, W52, D68, N84, and D109. K149 acts as the Proton acceptor in catalysis. The 59-residue stretch at 196 to 254 (PLRKGDKFVVDIEKLGSSGDGAVLIEGFVVFVKEVEVGEKVRIKITDVKPNFAFADVAE) folds into the TRAM domain.

It belongs to the class I-like SAM-binding methyltransferase superfamily. RNA methyltransferase RlmE family.

Its subcellular location is the cytoplasm. The catalysed reaction is uridine(2552) in 23S rRNA + S-adenosyl-L-methionine = 2'-O-methyluridine(2552) in 23S rRNA + S-adenosyl-L-homocysteine + H(+). Its function is as follows. Specifically methylates the uridine in position 2552 of 23S rRNA at the 2'-O position of the ribose in the fully assembled 50S ribosomal subunit. In Methanosarcina barkeri (strain Fusaro / DSM 804), this protein is Ribosomal RNA large subunit methyltransferase E.